A 557-amino-acid polypeptide reads, in one-letter code: Dihydroxy-acid dehydratase (557 aa).

Residue cysteine 50 participates in [2Fe-2S] cluster binding. Residue aspartate 82 coordinates Mg(2+). Cysteine 123 contacts [2Fe-2S] cluster. The Mg(2+) site is built by aspartate 124 and lysine 125. Lysine 125 is modified (N6-carboxylysine). Cysteine 195 serves as a coordination point for [2Fe-2S] cluster. Residue glutamate 447 coordinates Mg(2+). The active-site Proton acceptor is the serine 473.

The protein belongs to the IlvD/Edd family. In terms of assembly, homodimer. The cofactor is [2Fe-2S] cluster. Mg(2+) is required as a cofactor.

The enzyme catalyses (2R)-2,3-dihydroxy-3-methylbutanoate = 3-methyl-2-oxobutanoate + H2O. The catalysed reaction is (2R,3R)-2,3-dihydroxy-3-methylpentanoate = (S)-3-methyl-2-oxopentanoate + H2O. Its pathway is amino-acid biosynthesis; L-isoleucine biosynthesis; L-isoleucine from 2-oxobutanoate: step 3/4. It functions in the pathway amino-acid biosynthesis; L-valine biosynthesis; L-valine from pyruvate: step 3/4. Functions in the biosynthesis of branched-chain amino acids. Catalyzes the dehydration of (2R,3R)-2,3-dihydroxy-3-methylpentanoate (2,3-dihydroxy-3-methylvalerate) into 2-oxo-3-methylpentanoate (2-oxo-3-methylvalerate) and of (2R)-2,3-dihydroxy-3-methylbutanoate (2,3-dihydroxyisovalerate) into 2-oxo-3-methylbutanoate (2-oxoisovalerate), the penultimate precursor to L-isoleucine and L-valine, respectively. The chain is Dihydroxy-acid dehydratase from Nitrosospira multiformis (strain ATCC 25196 / NCIMB 11849 / C 71).